Consider the following 407-residue polypeptide: Carbamoyl phosphate synthase small chain (407 aa).

The CPSase stretch occupies residues 1-205 (MTETTPKTAP…LQDGYGEQDA (205 aa)). Residues Ser60, Gly257, and Gly259 each coordinate L-glutamine. Positions 209-397 (HVVALDFGVK…INLIRERKGQ (189 aa)) constitute a Glutamine amidotransferase type-1 domain. The active-site Nucleophile is the Cys286. L-glutamine contacts are provided by Leu287, Gln290, Asn328, Gly330, and Phe331. Residues His370 and Glu372 contribute to the active site.

The protein belongs to the CarA family. In terms of assembly, composed of two chains; the small (or glutamine) chain promotes the hydrolysis of glutamine to ammonia, which is used by the large (or ammonia) chain to synthesize carbamoyl phosphate. Tetramer of heterodimers (alpha,beta)4.

It catalyses the reaction hydrogencarbonate + L-glutamine + 2 ATP + H2O = carbamoyl phosphate + L-glutamate + 2 ADP + phosphate + 2 H(+). The catalysed reaction is L-glutamine + H2O = L-glutamate + NH4(+). It participates in amino-acid biosynthesis; L-arginine biosynthesis; carbamoyl phosphate from bicarbonate: step 1/1. Its pathway is pyrimidine metabolism; UMP biosynthesis via de novo pathway; (S)-dihydroorotate from bicarbonate: step 1/3. Functionally, small subunit of the glutamine-dependent carbamoyl phosphate synthetase (CPSase). CPSase catalyzes the formation of carbamoyl phosphate from the ammonia moiety of glutamine, carbonate, and phosphate donated by ATP, constituting the first step of 2 biosynthetic pathways, one leading to arginine and/or urea and the other to pyrimidine nucleotides. The small subunit (glutamine amidotransferase) binds and cleaves glutamine to supply the large subunit with the substrate ammonia. This Brucella abortus (strain S19) protein is Carbamoyl phosphate synthase small chain.